We begin with the raw amino-acid sequence, 1199 residues long: Ecdysone-induced protein 75B, isoforms C/D (1199 aa).

Residues 130–182 form a disordered region; sequence TTDGPTAVLQQQQPQQQMPQHFESLPHHHPQQEHQPQQQQQQHHLQHHPHPHV. Low complexity-rich tracts occupy residues 139-149 and 162-172; these read QQQQPQQQMPQ and EHQPQQQQQQH. The segment at residues 242–318 is a DNA-binding region (nuclear receptor); that stretch reads TVLCRVCGDK…VGMSRDAVRF (77 aa). 2 consecutive NR C4-type zinc fingers follow at residues 245 to 265 and 282 to 306; these read CRVC…CEGC and CTKN…LKKC. One can recognise an NR LBD domain in the interval 352-600; the sequence is DQPRLLAAVL…QQMWSMEDGN (249 aa). Disordered stretches follow at residues 624-665, 771-808, 831-851, 895-961, 991-1104, and 1155-1188; these read KSPL…SALA, LDSP…SVDD, VSVS…KRQI, AEAD…SSHS, ENST…SNSA, and VTVT…NPGL. Low complexity-rich tracts occupy residues 641 to 653, 792 to 804, 831 to 845, 897 to 942, and 950 to 961; these read GSPS…GVSL, SSGG…SPRS, VSVS…STSS, ADAS…AQSQ, and SSPKASMASSHS. Composition is skewed to polar residues over residues 993–1006 and 1018–1040; these read STAA…VGNR and AVQN…QRQQ. 3 stretches are compositionally biased toward low complexity: residues 1041 to 1077, 1086 to 1104, and 1159 to 1187; these read SVSP…SASS, STSN…SNSA, and ASNG…PNPG.

This sequence belongs to the nuclear hormone receptor family. NR1 subfamily.

Its subcellular location is the nucleus. In terms of biological role, implicated in the regulation of ecdysone-triggered gene hierarchies. Probably plays a key role in mediating the regulation of the larval molt by 20-OH-ecdysone. This is Ecdysone-induced protein 75B, isoforms C/D (Eip75B) from Drosophila melanogaster (Fruit fly).